The primary structure comprises 424 residues: UPF0415 protein C7orf25 homolog (424 aa).

This sequence belongs to the UPF0415 family.

This is UPF0415 protein C7orf25 homolog from Xenopus tropicalis (Western clawed frog).